Reading from the N-terminus, the 61-residue chain is Small ribosomal subunit protein uS14 (61 aa).

4 residues coordinate Zn(2+): Cys24, Cys27, Cys40, and Cys43.

Belongs to the universal ribosomal protein uS14 family. Zinc-binding uS14 subfamily. In terms of assembly, part of the 30S ribosomal subunit. Contacts proteins S3 and S10. It depends on Zn(2+) as a cofactor.

Functionally, binds 16S rRNA, required for the assembly of 30S particles and may also be responsible for determining the conformation of the 16S rRNA at the A site. The protein is Small ribosomal subunit protein uS14 of Helicobacter pylori (strain G27).